The primary structure comprises 307 residues: Probable GTP 3',8-cyclase (307 aa).

One can recognise a Radical SAM core domain in the interval 5-227; sequence AYGRRISSLR…RRTKYYLGGA (223 aa). Arginine 14 provides a ligand contact to GTP. Positions 21 and 25 each coordinate [4Fe-4S] cluster. Tyrosine 27 is a binding site for S-adenosyl-L-methionine. Residue cysteine 28 participates in [4Fe-4S] cluster binding. Lysine 61 serves as a coordination point for GTP. Glycine 65 serves as a coordination point for S-adenosyl-L-methionine. Position 89 (threonine 89) interacts with GTP. Serine 113 lines the S-adenosyl-L-methionine pocket. Lysine 151 is a binding site for GTP. Cysteine 241 and cysteine 244 together coordinate [4Fe-4S] cluster. 246-248 is a binding site for GTP; that stretch reads RLR. Cysteine 258 is a binding site for [4Fe-4S] cluster.

Belongs to the radical SAM superfamily. MoaA family. It depends on [4Fe-4S] cluster as a cofactor.

It carries out the reaction GTP + AH2 + S-adenosyl-L-methionine = (8S)-3',8-cyclo-7,8-dihydroguanosine 5'-triphosphate + 5'-deoxyadenosine + L-methionine + A + H(+). It functions in the pathway cofactor biosynthesis; molybdopterin biosynthesis. Functionally, catalyzes the cyclization of GTP to (8S)-3',8-cyclo-7,8-dihydroguanosine 5'-triphosphate. The polypeptide is Probable GTP 3',8-cyclase (Methanocella arvoryzae (strain DSM 22066 / NBRC 105507 / MRE50)).